A 660-amino-acid polypeptide reads, in one-letter code: Cysteine--tRNA ligase, cytoplasmic (660 aa).

A compositionally biased stretch (polar residues) spans 1 to 10 (MSENSSPKLE). The segment at 1–20 (MSENSSPKLESTSAAAASTK) is disordered. Residue cysteine 65 coordinates Zn(2+). The 'HIGH' region motif lies at 67–77 (PTVYDASHMGH). 3 residues coordinate Zn(2+): cysteine 256, histidine 281, and glutamate 285. The short motif at 314–318 (KMSKS) is the 'KMSKS' region element. Lysine 317 serves as a coordination point for ATP. Disordered stretches follow at residues 563–584 (IEKKKQADKEEKEKKLKEKFEK) and 627–660 (QKEYDNQTKEHNNYLKSLSTSTSSPTLTSTQSPQ). Residues 627-639 (QKEYDNQTKEHNN) show a composition bias toward basic and acidic residues. The segment covering 643–660 (SLSTSTSSPTLTSTQSPQ) has biased composition (low complexity).

Belongs to the class-I aminoacyl-tRNA synthetase family. Zn(2+) is required as a cofactor.

The protein resides in the cytoplasm. The catalysed reaction is tRNA(Cys) + L-cysteine + ATP = L-cysteinyl-tRNA(Cys) + AMP + diphosphate. The polypeptide is Cysteine--tRNA ligase, cytoplasmic (cysS) (Dictyostelium discoideum (Social amoeba)).